We begin with the raw amino-acid sequence, 116 residues long: RutC family protein HI_1627 (116 aa).

It belongs to the RutC family.

This is RutC family protein HI_1627 from Haemophilus influenzae (strain ATCC 51907 / DSM 11121 / KW20 / Rd).